A 94-amino-acid chain; its full sequence is Gibberellin-regulated protein 11 (94 aa).

An N-terminal signal peptide occupies residues 1–23; it reads MAVFRVLLASLLISLLVLDFVHA.

This sequence belongs to the GASA family. In terms of processing, six disulfide bonds may be present.

The protein localises to the secreted. Functionally, gibberellin-regulated protein that may function in hormonal controlled steps of development such as seed germination, flowering and seed maturation. The chain is Gibberellin-regulated protein 11 (GASA11) from Arabidopsis thaliana (Mouse-ear cress).